A 138-amino-acid chain; its full sequence is MCQQVVVVANTNNKMKTSYSIKQVLKTLFKKQQKQQQKPQGSLESLESVDNLRNAQVEEAYYAEIDENAANEKLAQLAHSQEFEIVEEQEDEEDVYVPVRFARTTAGTFFWTTNLQPVASVEPAMCYSMQFQDRWAQA.

The protein belongs to the M4-like protein family.

Its function is as follows. Part of the Notch signaling pathway. In Drosophila melanogaster (Fruit fly), this protein is Enhancer of split malpha protein.